A 562-amino-acid polypeptide reads, in one-letter code: Dihydroxy-acid dehydratase (562 aa).

Residue C53 participates in [2Fe-2S] cluster binding. D85 contributes to the Mg(2+) binding site. [2Fe-2S] cluster is bound at residue C126. The Mg(2+) site is built by D127 and K128. Position 128 is an N6-carboxylysine (K128). C198 serves as a coordination point for [2Fe-2S] cluster. E449 provides a ligand contact to Mg(2+). Catalysis depends on S475, which acts as the Proton acceptor.

This sequence belongs to the IlvD/Edd family. Homodimer. The cofactor is [2Fe-2S] cluster. Mg(2+) is required as a cofactor.

It catalyses the reaction (2R)-2,3-dihydroxy-3-methylbutanoate = 3-methyl-2-oxobutanoate + H2O. The catalysed reaction is (2R,3R)-2,3-dihydroxy-3-methylpentanoate = (S)-3-methyl-2-oxopentanoate + H2O. Its pathway is amino-acid biosynthesis; L-isoleucine biosynthesis; L-isoleucine from 2-oxobutanoate: step 3/4. The protein operates within amino-acid biosynthesis; L-valine biosynthesis; L-valine from pyruvate: step 3/4. In terms of biological role, functions in the biosynthesis of branched-chain amino acids. Catalyzes the dehydration of (2R,3R)-2,3-dihydroxy-3-methylpentanoate (2,3-dihydroxy-3-methylvalerate) into 2-oxo-3-methylpentanoate (2-oxo-3-methylvalerate) and of (2R)-2,3-dihydroxy-3-methylbutanoate (2,3-dihydroxyisovalerate) into 2-oxo-3-methylbutanoate (2-oxoisovalerate), the penultimate precursor to L-isoleucine and L-valine, respectively. This is Dihydroxy-acid dehydratase from Methylococcus capsulatus (strain ATCC 33009 / NCIMB 11132 / Bath).